Consider the following 126-residue polypeptide: uncharacterized protein (126 aa).

Residues 55–77 (MLLINSNLVLSGLLLFIDVYRAA) traverse the membrane as a helical segment.

The protein resides in the membrane. This is an uncharacterized protein from Dictyostelium discoideum (Social amoeba).